Reading from the N-terminus, the 428-residue chain is Cytochrome c biogenesis protein CcsB (428 aa).

3 helical membrane passes run 14 to 34 (LRFA…GTFI), 72 to 92 (SFWF…CSFR), and 162 to 182 (IGPL…AYGS).

The protein belongs to the Ccs1/CcsB family. As to quaternary structure, may interact with CcsA.

Its subcellular location is the cellular thylakoid membrane. Its function is as follows. Required during biogenesis of c-type cytochromes (cytochrome c6 and cytochrome f) at the step of heme attachment. This Prochlorococcus marinus (strain AS9601) protein is Cytochrome c biogenesis protein CcsB.